Consider the following 543-residue polypeptide: Sarafotoxin (543 aa).

A signal peptide spans 1–23 (MALLPRLAAGGLLLLLALAALEG). The propeptide occupies 24-69 (KPAPSALSQLLEKRSEDQAAAGRIIDGGDTKQAARDPSPQRNVEPL). The interval 45 to 65 (GRIIDGGDTKQAARDPSPQRN) is disordered. 12 consecutive repeat copies span residues 51-90 (GDTKQAARDPSPQRNVEPLCSCKDMSDKECLNFCHQDVIW), 91-130 (RDTKQAARDPSPQRNVEPLCTCNDMTDEECLNFCHQDVIW), 131-170 (RDTKQAARDPSPQRNVEPLCSCKDMTDKECLYFCHQDVIW), 171-210 (RDTKQAARDPSPQRNVEPLCTCNDMTDEECLNFCHQDVIW), 211-250 (RDTKQAARDPSPQRNVEPLCTCNDMTDEECLNFCHQDVIW), 251-290 (RDTKQAARDPSPQRNVEPLCTCKDMTDKECLYFCHQGIIW), 291-330 (RDTKQAARDPSPQRNVEPLCSCKDMSDKECLNFCHQDVIW), 331-370 (RDTKQAARDPSPQRNVEPLCTCNDMTDEECLNFCHQDVIW), 371-410 (RDTKQAARDPSPQRNVEPLCTCNDMTDEECLNFCHQDVIW), 411-450 (RDTKQAARDPSPQRNVEPLCSCKDMTDKECLYFCHQDVIW), 451-490 (RDTKQAARDPSPQRNVEPLCSCKDMSDKECLNFCHQDVIW), and 491-530 (RDTKQAARDPSPQRNVEPLCSCKDMTDKECLNFCHQDVIW). The segment at 51–530 (GDTKQAARDP…LNFCHQDVIW (480 aa)) is 12 X 40 AA tandem repeats. 2 disulfides stabilise this stretch: C70–C84 and C72–C80. The propeptide occupies 92-109 (DTKQAARDPSPQRNVEPL). Disulfide bonds link C110–C124 and C112–C120. A propeptide spanning residues 132–149 (DTKQAARDPSPQRNVEPL) is cleaved from the precursor. Disulfide bonds link C150/C164 and C152/C160. A propeptide spanning residues 172–189 (DTKQAARDPSPQRNVEPL) is cleaved from the precursor. Disulfide bonds link C190-C204 and C192-C200. Residues 212–229 (DTKQAARDPSPQRNVEPL) constitute a propeptide that is removed on maturation. 2 disulfides stabilise this stretch: C230–C244 and C232–C240. A propeptide spanning residues 252–269 (DTKQAARDPSPQRNVEPL) is cleaved from the precursor. 2 disulfide bridges follow: C270–C284 and C272–C280. A propeptide spanning residues 292–309 (DTKQAARDPSPQRNVEPL) is cleaved from the precursor. 2 disulfide bridges follow: C310–C324 and C312–C320. A propeptide spanning residues 332–349 (DTKQAARDPSPQRNVEPL) is cleaved from the precursor. Cystine bridges form between C350/C364 and C352/C360. Positions 372–389 (DTKQAARDPSPQRNVEPL) are excised as a propeptide. 2 cysteine pairs are disulfide-bonded: C390/C404 and C392/C400. A propeptide spanning residues 412 to 429 (DTKQAARDPSPQRNVEPL) is cleaved from the precursor. 2 disulfide bridges follow: C430/C444 and C432/C440. The propeptide occupies 452–469 (DTKQAARDPSPQRNVEPL). 2 cysteine pairs are disulfide-bonded: C470/C484 and C472/C480. The propeptide occupies 492–509 (DTKQAARDPSPQRNVEPL). 2 cysteine pairs are disulfide-bonded: C510/C524 and C512/C520. Residues 532–543 (NADTSANPEFLG) constitute a propeptide that is removed on maturation.

This sequence belongs to the endothelin/sarafotoxin family. As to expression, expressed by the venom gland.

It is found in the secreted. Vasoconstrictor activity. These toxins cause cardiac arrest probably as a result of coronary vasospasm. In terms of biological role, vasoconstrictor activity. Causes cardiac arrest probably as a result of coronary vasospasm. Displays high agonistic activities towards endothelin-2 receptor (EDNRB) (displays affinity in the picomolar range) and endothelin-1 receptor (EDNRA) (lower affinities). This is Sarafotoxin from Atractaspis engaddensis (Israeli burrowing asp).